Here is a 500-residue protein sequence, read N- to C-terminus: Endothelial lipase (500 aa).

Residues Met1 to Gly20 form the signal peptide. Cys64 and Cys77 are oxidised to a cystine. 2 N-linked (GlcNAc...) asparagine glycosylation sites follow: Asn80 and Asn136. Ser169 serves as the catalytic Nucleophile. Asp193 serves as the catalytic Charge relay system. Cysteines 252 and 272 form a disulfide. The active-site Charge relay system is the His274. Cystine bridges form between Cys297–Cys316 and Cys308–Cys311. Lys325–Lys337 contributes to the heparin binding site. The 136-residue stretch at Tyr347–Lys482 folds into the PLAT domain. Asn393, Asn469, and Asn491 each carry an N-linked (GlcNAc...) asparagine glycan. Cysteines 463 and 483 form a disulfide.

It belongs to the AB hydrolase superfamily. Lipase family. As to quaternary structure, head to tail homodimer. High level of expression in the liver, placenta, lung, thyroid, kidney, testis and in the corpus luteum of the ovary. Expressed also in coronary artery endothelial cells, umbilical vein endothelial cells and in hepatocytes and osteosarcoma cell lines. Not detected in heart, brain and muscle.

Its subcellular location is the secreted. The enzyme catalyses a triacylglycerol + H2O = a diacylglycerol + a fatty acid + H(+). It catalyses the reaction a 1,2-diacyl-sn-glycero-3-phosphocholine + H2O = a 2-acyl-sn-glycero-3-phosphocholine + a fatty acid + H(+). The catalysed reaction is 1,2,3-tri-(9Z-octadecenoyl)-glycerol + H2O = di-(9Z)-octadecenoylglycerol + (9Z)-octadecenoate + H(+). It carries out the reaction 1,2,3-tributanoylglycerol + H2O = dibutanoylglycerol + butanoate + H(+). The enzyme catalyses 1,2-dihexadecanoyl-sn-glycero-3-phosphocholine + H2O = hexadecanoyl-sn-glycero-3-phosphocholine + hexadecanoate + H(+). Inhibited by serum and NaCl. Functionally, exerts both phospholipase and triglyceride lipase activities. More active as a phospholipase than a triglyceride lipase. Hydrolyzes triglycerides, both with short-chain fatty acyl groups (tributyrin) and long-chain fatty acyl groups (triolein) with similar levels of activity toward both types of substrates. Hydrolyzes high density lipoproteins (HDL) more efficiently than other lipoproteins. In Homo sapiens (Human), this protein is Endothelial lipase (LIPG).